A 134-amino-acid polypeptide reads, in one-letter code: Methylglyoxal synthase (134 aa).

The 134-residue stretch at 1–134 (MHIALIAHDE…DWRDLRRNDE (134 aa)) folds into the MGS-like domain. Substrate contacts are provided by residues histidine 8, lysine 12, 34-37 (TGTT), and 54-55 (SG). Aspartate 60 (proton donor/acceptor) is an active-site residue. Histidine 87 is a binding site for substrate.

The protein belongs to the methylglyoxal synthase family.

The enzyme catalyses dihydroxyacetone phosphate = methylglyoxal + phosphate. Functionally, catalyzes the formation of methylglyoxal from dihydroxyacetone phosphate. The chain is Methylglyoxal synthase from Listeria welshimeri serovar 6b (strain ATCC 35897 / DSM 20650 / CCUG 15529 / CIP 8149 / NCTC 11857 / SLCC 5334 / V8).